Reading from the N-terminus, the 602-residue chain is Sulfite reductase [NADPH] hemoprotein beta-component (602 aa).

The segment covering methionine 1–tyrosine 15 has biased composition (basic and acidic residues). The tract at residues methionine 1 to isoleucine 24 is disordered. [4Fe-4S] cluster-binding residues include cysteine 458, cysteine 464, cysteine 503, and cysteine 507. Residue cysteine 507 coordinates siroheme.

It belongs to the nitrite and sulfite reductase 4Fe-4S domain family. In terms of assembly, alpha(8)-beta(8). The alpha component is a flavoprotein, the beta component is a hemoprotein. Siroheme serves as cofactor. The cofactor is [4Fe-4S] cluster.

The enzyme catalyses hydrogen sulfide + 3 NADP(+) + 3 H2O = sulfite + 3 NADPH + 4 H(+). The protein operates within sulfur metabolism; hydrogen sulfide biosynthesis; hydrogen sulfide from sulfite (NADPH route): step 1/1. Functionally, component of the sulfite reductase complex that catalyzes the 6-electron reduction of sulfite to sulfide. This is one of several activities required for the biosynthesis of L-cysteine from sulfate. In Methylobacterium nodulans (strain LMG 21967 / CNCM I-2342 / ORS 2060), this protein is Sulfite reductase [NADPH] hemoprotein beta-component.